Here is a 147-residue protein sequence, read N- to C-terminus: Calcium-regulated heat-stable protein 1 (147 aa).

The span at 1 to 12 (MSSEPPPPPQPP) shows a compositional bias: pro residues. The disordered stretch occupies residues 1-52 (MSSEPPPPPQPPTHQASVGLLDTPRSRERSPSPLRGNVVPSPLPTRRTRTFS). At Ser-2 the chain carries N-acetylserine. Phosphoserine occurs at positions 30, 32, and 41. A Phosphothreonine modification is found at Thr-45. Ser-52 and Ser-58 each carry phosphoserine. The 68-residue stretch at 62 to 129 (VYKGVCKCFC…KLQAVEVVIT (68 aa)) folds into the CSD domain. A phosphoserine mark is found at Ser-146 and Ser-147.

In terms of assembly, homodimer. Interacts with STYX. In terms of processing, dephosphorylated by calcineurin in a Ca(2+) dependent manner. Can be phosphorylated by DYRK2 (in vitro).

It is found in the cytoplasm. It localises to the P-body. Its subcellular location is the cytoplasmic granule. Functionally, binds mRNA and regulates the stability of target mRNA. Binds single-stranded DNA (in vitro). This Homo sapiens (Human) protein is Calcium-regulated heat-stable protein 1 (CARHSP1).